The chain runs to 274 residues: Hydroxyethylthiazole kinase (274 aa).

Position 51 (methionine 51) interacts with substrate. ATP contacts are provided by arginine 127 and serine 173. Substrate is bound at residue glycine 200.

This sequence belongs to the Thz kinase family. Mg(2+) is required as a cofactor.

The enzyme catalyses 5-(2-hydroxyethyl)-4-methylthiazole + ATP = 4-methyl-5-(2-phosphooxyethyl)-thiazole + ADP + H(+). Its pathway is cofactor biosynthesis; thiamine diphosphate biosynthesis; 4-methyl-5-(2-phosphoethyl)-thiazole from 5-(2-hydroxyethyl)-4-methylthiazole: step 1/1. Functionally, catalyzes the phosphorylation of the hydroxyl group of 4-methyl-5-beta-hydroxyethylthiazole (THZ). The chain is Hydroxyethylthiazole kinase from Photobacterium profundum (strain SS9).